The primary structure comprises 114 residues: Transmembrane protein 14DP (114 aa).

The next 4 membrane-spanning stretches (helical) occupy residues 8 to 28 (LVPL…GGIV), 36 to 56 (APSL…AYQL), 63 to 80 (VWDF…IMGM), and 83 to 103 (YYYG…LMAA).

This sequence belongs to the TMEM14 family.

Its subcellular location is the membrane. The protein is Transmembrane protein 14DP (TMEM14DP) of Homo sapiens (Human).